Here is a 232-residue protein sequence, read N- to C-terminus: Large ribosomal subunit protein uL1 (232 aa).

This sequence belongs to the universal ribosomal protein uL1 family. Part of the 50S ribosomal subunit.

Binds directly to 23S rRNA. The L1 stalk is quite mobile in the ribosome, and is involved in E site tRNA release. In terms of biological role, protein L1 is also a translational repressor protein, it controls the translation of the L11 operon by binding to its mRNA. The polypeptide is Large ribosomal subunit protein uL1 (Cereibacter sphaeroides (strain ATCC 17029 / ATH 2.4.9) (Rhodobacter sphaeroides)).